The chain runs to 1273 residues: Probable methionine synthase (1273 aa).

The Hcy-binding domain maps to 7–327 (FKELADIAKE…DHINAMYKAV (321 aa)). Residues Cys-249, Cys-312, and Cys-313 each contribute to the Zn(2+) site. One can recognise a Pterin-binding domain in the interval 360-621 (FVNIGERCNV…IDKPLLQLLE (262 aa)). One can recognise a B12-binding N-terminal domain in the interval 652–749 (KTDEWRNTSV…FMDAERQANI (98 aa)). Methylcob(III)alamin contacts are provided by residues Glu-699, 772-776 (GDVHD), His-775, Ser-820, Thr-824, and Ala-876. Residues 762–897 (QGTVVIATVK…DMTVRDAFLQ (136 aa)) enclose the B12-binding domain. The AdoMet activation domain maps to 927–1273 (SLKDRRFVAL…LSPIIGYELD (347 aa)). S-adenosyl-L-methionine-binding positions include Asp-977, Arg-1171, and 1225–1226 (YF).

The protein belongs to the vitamin-B12 dependent methionine synthase family. It depends on methylcob(III)alamin as a cofactor. The cofactor is Zn(2+).

The enzyme catalyses (6S)-5-methyl-5,6,7,8-tetrahydrofolate + L-homocysteine = (6S)-5,6,7,8-tetrahydrofolate + L-methionine. It functions in the pathway amino-acid biosynthesis; L-methionine biosynthesis via de novo pathway; L-methionine from L-homocysteine (MetH route): step 1/1. In terms of biological role, catalyzes the transfer of a methyl group from methyl-cobalamin to homocysteine, yielding enzyme-bound cob(I)alamin and methionine. Subsequently, remethylates the cofactor using methyltetrahydrofolate. The chain is Probable methionine synthase (metr-1) from Caenorhabditis briggsae.